The following is a 96-amino-acid chain: Probable Fe(2+)-trafficking protein (96 aa).

The disordered stretch occupies residues 21–40 (LPKMPHPPFPNKKGQELQET).

It belongs to the Fe(2+)-trafficking protein family.

Functionally, could be a mediator in iron transactions between iron acquisition and iron-requiring processes, such as synthesis and/or repair of Fe-S clusters in biosynthetic enzymes. This Psychrobacter arcticus (strain DSM 17307 / VKM B-2377 / 273-4) protein is Probable Fe(2+)-trafficking protein.